The chain runs to 34 residues: IICAPEGGPCVAGIGCCAGLRCSGAKLGLAGSCQ.

Disulfide bonds link Cys-3-Cys-17, Cys-10-Cys-22, and Cys-16-Cys-33.

It belongs to the neurotoxin 14 (magi-1) family. 05 (ICK-7) subfamily. As to expression, expressed by the venom gland.

The protein localises to the secreted. Functionally, intracisternal injection paralyzes mice. This is U4-theraphotoxin-Hs1a from Cyriopagopus schmidti (Chinese bird spider).